Reading from the N-terminus, the 370-residue chain is Queuine tRNA-ribosyltransferase (370 aa).

Catalysis depends on Asp93, which acts as the Proton acceptor. Residues 93-97 (DSGGF), Asp147, Gln190, and Gly217 contribute to the substrate site. The RNA binding stretch occupies residues 248-254 (GVGTPDY). Asp267 functions as the Nucleophile in the catalytic mechanism. Residues 272–276 (TRVAR) are RNA binding; important for wobble base 34 recognition. Residues Cys305, Cys307, Cys310, and His336 each coordinate Zn(2+).

The protein belongs to the queuine tRNA-ribosyltransferase family. As to quaternary structure, homodimer. Within each dimer, one monomer is responsible for RNA recognition and catalysis, while the other monomer binds to the replacement base PreQ1. Requires Zn(2+) as cofactor.

The enzyme catalyses 7-aminomethyl-7-carbaguanine + guanosine(34) in tRNA = 7-aminomethyl-7-carbaguanosine(34) in tRNA + guanine. Its pathway is tRNA modification; tRNA-queuosine biosynthesis. Its function is as follows. Catalyzes the base-exchange of a guanine (G) residue with the queuine precursor 7-aminomethyl-7-deazaguanine (PreQ1) at position 34 (anticodon wobble position) in tRNAs with GU(N) anticodons (tRNA-Asp, -Asn, -His and -Tyr). Catalysis occurs through a double-displacement mechanism. The nucleophile active site attacks the C1' of nucleotide 34 to detach the guanine base from the RNA, forming a covalent enzyme-RNA intermediate. The proton acceptor active site deprotonates the incoming PreQ1, allowing a nucleophilic attack on the C1' of the ribose to form the product. After dissociation, two additional enzymatic reactions on the tRNA convert PreQ1 to queuine (Q), resulting in the hypermodified nucleoside queuosine (7-(((4,5-cis-dihydroxy-2-cyclopenten-1-yl)amino)methyl)-7-deazaguanosine). In Natranaerobius thermophilus (strain ATCC BAA-1301 / DSM 18059 / JW/NM-WN-LF), this protein is Queuine tRNA-ribosyltransferase.